The sequence spans 414 residues: Enterobactin exporter EntS (414 aa).

The Cytoplasmic segment spans residues 1–21 (MNRQSWLLNLSLLKTHPAFRA). The helical transmembrane segment at 22-42 (VFLARFISIVSLGLLGVAVPV) threads the bilayer. The Periplasmic segment spans residues 43-55 (QIQMMTHSTWQVG). Residues 56-76 (LSVTLTGGAMFIGLMVGGVLA) traverse the membrane as a helical segment. Topologically, residues 77–83 (DRYERKK) are cytoplasmic. A helical transmembrane segment spans residues 84-104 (VILLARGTCGIGFIGLCVNAL). Over 105–109 (LPEPS) the chain is Periplasmic. The helical transmembrane segment at 110–130 (LLAIYLLGLWDGFFASLGVTA) threads the bilayer. At 131–156 (LLAATPALVGRENLMQAGAITMLTVR) the chain is on the cytoplasmic side. Residues 157–177 (LGSVISPMLGGILLASGGVAW) form a helical membrane-spanning segment. Asparagine 178 is a topological domain (periplasmic). The chain crosses the membrane as a helical span at residues 179-199 (YGLAAAGTFITLLPLLTLPRL). Over 200-218 (PVPPQPRENPFIALLAAFR) the chain is Cytoplasmic. The chain crosses the membrane as a helical span at residues 219–239 (FLLASPLIGGIALLGGLVTMA). Topologically, residues 240 to 256 (SAVRVLYPALAMSWQMS) are periplasmic. Residues 257–277 (AAQIGLLYAAIPLGAAIGALT) form a helical membrane-spanning segment. The Cytoplasmic portion of the chain corresponds to 278-287 (SGQLAHSVRP). A helical membrane pass occupies residues 288–307 (GLIMLVSTVGSFLAVGLFAI). Topologically, residues 308–313 (MPVWIA) are periplasmic. The helical transmembrane segment at 314 to 336 (GVICLALFGWLSAISSLLQYTLL) threads the bilayer. The Cytoplasmic segment spans residues 337-356 (QTQTPENMLGRMNGLWTAQN). A helical membrane pass occupies residues 357 to 377 (VTGDAIGAALLGGLGAMMTPV). Residue alanine 378 is a topological domain, periplasmic. The chain crosses the membrane as a helical span at residues 379 to 399 (SASVSGFGLVIIGLLLLLVLG). Topologically, residues 400–414 (ELRRFRQTPPVSDAG) are cytoplasmic.

The protein belongs to the major facilitator superfamily. EntS (TC 2.A.1.38) family.

It is found in the cell inner membrane. In terms of biological role, component of an export pathway for enterobactin. This is Enterobactin exporter EntS from Salmonella typhimurium (strain LT2 / SGSC1412 / ATCC 700720).